The chain runs to 110 residues: Evasin P1166 (110 aa).

The signal sequence occupies residues 1 to 24; that stretch reads MEVKIFTLLQIALFIALGIHLVVA. 3 cysteine pairs are disulfide-bonded: C45/C67, C49/C69, and C60/C80. N48 carries N-linked (GlcNAc...) asparagine glycosylation. The disordered stretch occupies residues 89-110; the sequence is SEYPNPKSSEIDAAAPLPRETH.

It localises to the secreted. In terms of biological role, salivary chemokine-binding protein which binds to host chemokines CXCL1, CXCL2 and CXCL8. The polypeptide is Evasin P1166 (Ixodes ricinus (Common tick)).